The sequence spans 871 residues: Translation initiation factor IF-2 (871 aa).

Disordered regions lie at residues 60-101 (KKNI…QEVK) and 184-203 (ESLKKKKKEKKSFVASKKES). The segment covering 61–72 (KNIKTPTAKKPK) has biased composition (basic residues). Residues 73–101 (KENIKEQEKLNESEKKEPKKEEKLKQEVK) are compositionally biased toward basic and acidic residues. Positions 370 to 537 (TRAPVITIMG…IVLLQADILE (168 aa)) constitute a tr-type G domain. Positions 379-386 (GHVDHGKT) are G1. A GTP-binding site is contributed by 379 to 386 (GHVDHGKT). Positions 404–408 (GITQH) are G2. The segment at 425–428 (DTPG) is G3. GTP contacts are provided by residues 425-429 (DTPGH) and 479-482 (NKMD). A G4 region spans residues 479-482 (NKMD). The tract at residues 515 to 517 (SAK) is G5.

This sequence belongs to the TRAFAC class translation factor GTPase superfamily. Classic translation factor GTPase family. IF-2 subfamily.

The protein localises to the cytoplasm. One of the essential components for the initiation of protein synthesis. Protects formylmethionyl-tRNA from spontaneous hydrolysis and promotes its binding to the 30S ribosomal subunits. Also involved in the hydrolysis of GTP during the formation of the 70S ribosomal complex. This Campylobacter jejuni subsp. jejuni serotype O:23/36 (strain 81-176) protein is Translation initiation factor IF-2.